Reading from the N-terminus, the 197-residue chain is Nucleoid occlusion factor SlmA (197 aa).

One can recognise an HTH tetR-type domain in the interval 7 to 67 (INRREHILQC…GLIEFIEESL (61 aa)). The H-T-H motif DNA-binding region spans 30 to 49 (TTAKLASEVGVSEAALYRHF). Positions 110 to 130 (ALLGENERLRSRISSLFAKIE) form a coiled coil.

This sequence belongs to the nucleoid occlusion factor SlmA family. Homodimer. Interacts with FtsZ.

The protein resides in the cytoplasm. It localises to the nucleoid. Its function is as follows. Required for nucleoid occlusion (NO) phenomenon, which prevents Z-ring formation and cell division over the nucleoid. Acts as a DNA-associated cell division inhibitor that binds simultaneously chromosomal DNA and FtsZ, and disrupts the assembly of FtsZ polymers. SlmA-DNA-binding sequences (SBS) are dispersed on non-Ter regions of the chromosome, preventing FtsZ polymerization at these regions. This is Nucleoid occlusion factor SlmA from Shewanella sp. (strain W3-18-1).